The sequence spans 258 residues: Small ribosomal subunit protein uS3 (258 aa).

Residues 16-85 (IDEYLEKELE…NPQVEVKEVD (70 aa)) form the KH type-2 domain. The interval 198-258 (RVTETPAEEA…KDADGEESEK (61 aa)) is disordered. Residues 203-245 (PAEEASEASEVVEDLEEVEDLEEIEDLEEVEDLEEVEDLEDTE) show a composition bias toward acidic residues.

The protein belongs to the universal ribosomal protein uS3 family. As to quaternary structure, part of the 30S ribosomal subunit.

In terms of biological role, binds the lower part of the 30S subunit head. This is Small ribosomal subunit protein uS3 from Methanothermobacter thermautotrophicus (strain ATCC 29096 / DSM 1053 / JCM 10044 / NBRC 100330 / Delta H) (Methanobacterium thermoautotrophicum).